A 185-amino-acid polypeptide reads, in one-letter code: MNPHNVKYLAKILCLKAEIQKNPYAVISKDVVHRYSTDIRYGDLTTIISVRHKTSTSNTVFQVFNESSVNYTPVDNDYGYPIIITSFLQTGHNKFPISFLYIDVVASDVFPKFARLSPTDVATVYSVLQIGDTKDALKLPRMLETEISAKILFHKDFPLKIVRFFKNNMVTGEEISDRSLVAVLE.

The protein belongs to the poxviridae DNA-directed RNA polymerase 22 kDa subunit family. In terms of assembly, the DNA-dependent RNA polymerase used for intermediate and late genes expression consists of eight subunits Rpo30/OPG66, Rpo7/OPG90, Rpo22/OPG103, Rpo147/OPG105, Rpo18/OPG119, Rpo19/OPG131, Rpo132/OPG151 and Rpo35/OPG156. The same holoenzyme, with the addition of the transcription-specificity factor OPG109, is used for early gene expression.

It is found in the virion. It carries out the reaction RNA(n) + a ribonucleoside 5'-triphosphate = RNA(n+1) + diphosphate. Its function is as follows. Part of the DNA-dependent RNA polymerase which catalyzes the transcription of viral DNA into RNA using the four ribonucleoside triphosphates as substrates. Responsible for the transcription of early, intermediate and late genes. DNA-dependent RNA polymerase associates with the early transcription factor (ETF), itself composed of OPG118 and OPG133, thereby allowing the early genes transcription. Late transcription, and probably also intermediate transcription, require newly synthesized RNA polymerase. The chain is DNA-directed RNA polymerase 21 kDa subunit (OPG103) from Oryctolagus cuniculus (Rabbit).